Here is a 199-residue protein sequence, read N- to C-terminus: NAD(P)H dehydrogenase (quinone) (199 aa).

In terms of domain architecture, Flavodoxin-like spans 4–190 (MLVLYYSAYG…DGARFQGRRV (187 aa)). Residues 10-15 (SAYGYM) and 78-80 (TRY) each bind FMN. Position 12 (tyrosine 12) interacts with NAD(+). Tryptophan 98 contributes to the substrate binding site. FMN contacts are provided by residues 113–119 (STATQHG) and histidine 134. A disordered region spans residues 158 to 181 (GAPYGMTTTADGDGSRQPSAQELD). Polar residues predominate over residues 163–177 (MTTTADGDGSRQPSA).

This sequence belongs to the WrbA family. FMN is required as a cofactor.

The catalysed reaction is a quinone + NADH + H(+) = a quinol + NAD(+). The enzyme catalyses a quinone + NADPH + H(+) = a quinol + NADP(+). The polypeptide is NAD(P)H dehydrogenase (quinone) (Brucella abortus (strain S19)).